The chain runs to 655 residues: MKKFKLNSPYKPLGDQPKAINSLVDGINKGEKEQTLLGVTGSGKTFTMANVIEKVQKPTLVISHNKTLAAQLYEEFKEFFPDNAVEYFVSYYDYYQPEAYVPRTDTFIDKESSVNEEIDIMRHSATQSLLSRDDVIVVSSVSCIYGIGSPEDYGEFAFGIAVGDNYDRSDIIRKLVFMQYERNDIEFARGHFRVRGDVIEINPVHGTPPVRVELFGDEIDAISLIDKVTGKKTESLKRYMIFPAKHFVVGQDKMDTAIRNISDELDERLNEFNLSNKLLEAQRLEQRTRFDIEMLQEMGYCPGVENYSMHLSGRKWGEKPYSLLKYFPEDYLTIIDESHVTLPQIRGMYNGDRARKETLVEHGFRLPSAKENRPLRFDEFESSINQIIYVSATPGAYELSRSSNIVEQIIRPTGLVDPEVIIRPVKGQVEDLLGEVKKRAKKDERVLVTTLTKKMAEDLTDYYAKIGVKVRYMHSEIDTLERIDIVDDLRRGTFDVLVGVNLLREGLDLPEVSLVAILDADKEGFLRNETSLIQTIGRAARNINGQVIMYVDEMTDSVKNATAITSKRRKIQIKYNEKHGIVPKTTKRALKDKKVAEDLDIEGTDISKIPKDELRLLISDLENDMKEAAAKLDFERAASLRDQIATLKGLKKDSS.

In terms of domain architecture, Helicase ATP-binding spans 25-181; it reads DGINKGEKEQ…IRKLVFMQYE (157 aa). Position 38–45 (38–45) interacts with ATP; the sequence is GVTGSGKT. The short motif at 91 to 114 is the Beta-hairpin element; sequence YYDYYQPEAYVPRTDTFIDKESSV. A Helicase C-terminal domain is found at 428–590; it reads QVEDLLGEVK…IVPKTTKRAL (163 aa). A UVR domain is found at 615–650; it reads RLLISDLENDMKEAAAKLDFERAASLRDQIATLKGL.

It belongs to the UvrB family. As to quaternary structure, forms a heterotetramer with UvrA during the search for lesions. Interacts with UvrC in an incision complex.

Its subcellular location is the cytoplasm. Its function is as follows. The UvrABC repair system catalyzes the recognition and processing of DNA lesions. A damage recognition complex composed of 2 UvrA and 2 UvrB subunits scans DNA for abnormalities. Upon binding of the UvrA(2)B(2) complex to a putative damaged site, the DNA wraps around one UvrB monomer. DNA wrap is dependent on ATP binding by UvrB and probably causes local melting of the DNA helix, facilitating insertion of UvrB beta-hairpin between the DNA strands. Then UvrB probes one DNA strand for the presence of a lesion. If a lesion is found the UvrA subunits dissociate and the UvrB-DNA preincision complex is formed. This complex is subsequently bound by UvrC and the second UvrB is released. If no lesion is found, the DNA wraps around the other UvrB subunit that will check the other stand for damage. The protein is UvrABC system protein B of Methanobrevibacter smithii (strain ATCC 35061 / DSM 861 / OCM 144 / PS).